A 144-amino-acid chain; its full sequence is Peroxisome assembly protein 22 (144 aa).

Residues 13 to 35 (YGAVSLASLLVAASIVAYRWWNA) traverse the membrane as a helical segment.

The protein belongs to the peroxin-22 family.

It localises to the peroxisome membrane. Functionally, involved in peroxisome biogenesis. The chain is Peroxisome assembly protein 22 (PEX22) from Eremothecium gossypii (strain ATCC 10895 / CBS 109.51 / FGSC 9923 / NRRL Y-1056) (Yeast).